Reading from the N-terminus, the 166-residue chain is Large ribosomal subunit protein uL10 (166 aa).

In terms of assembly, part of the ribosomal stalk of the 50S ribosomal subunit. The N-terminus interacts with L11 and 23S rRNA to form the base of the stalk. The C-terminus forms an elongated spine to which L12 dimers bind in a sequential fashion forming a pentameric L10(L12)2(L12)2 complex.

Forms part of the ribosomal stalk, playing a central role in the interaction of the ribosome with GTP-bound translation factors (such as IF-2, EF-Tu, EF-G and RF3). This Bacillus subtilis (strain 168) protein is Large ribosomal subunit protein uL10 (rplJ).